We begin with the raw amino-acid sequence, 95 residues long: AISCGQVSSAIGPCLAYARGAGAAPSASCQSGVRSLNAAARTTADRRAACNCSLKSAASRVSGLNAGKASSIPGRCGVRLPYAISASIDCSRVNN.

Cystine bridges form between Cys4–Cys52, Cys14–Cys29, and Cys50–Cys90.

It belongs to the plant LTP family. Seeds.

Plant non-specific lipid-transfer proteins transfer phospholipids as well as galactolipids across membranes. May play a role in wax or cutin deposition in the cell walls of expanding epidermal cells and certain secretory tissues. This chain is Non-specific lipid-transfer protein, found in Eleusine coracana (Indian finger millet).